We begin with the raw amino-acid sequence, 401 residues long: ATP phosphoribosyltransferase regulatory subunit (401 aa).

This sequence belongs to the class-II aminoacyl-tRNA synthetase family. HisZ subfamily. In terms of assembly, heteromultimer composed of HisG and HisZ subunits.

It localises to the cytoplasm. It participates in amino-acid biosynthesis; L-histidine biosynthesis; L-histidine from 5-phospho-alpha-D-ribose 1-diphosphate: step 1/9. Required for the first step of histidine biosynthesis. May allow the feedback regulation of ATP phosphoribosyltransferase activity by histidine. The chain is ATP phosphoribosyltransferase regulatory subunit from Desulforamulus reducens (strain ATCC BAA-1160 / DSM 100696 / MI-1) (Desulfotomaculum reducens).